A 261-amino-acid chain; its full sequence is Thiazole synthase (261 aa).

Catalysis depends on lysine 102, which acts as the Schiff-base intermediate with DXP. 1-deoxy-D-xylulose 5-phosphate-binding positions include glycine 163, 189-190, and 211-212; these read AG and NT.

This sequence belongs to the ThiG family. Homotetramer. Forms heterodimers with either ThiH or ThiS.

It localises to the cytoplasm. It carries out the reaction [ThiS sulfur-carrier protein]-C-terminal-Gly-aminoethanethioate + 2-iminoacetate + 1-deoxy-D-xylulose 5-phosphate = [ThiS sulfur-carrier protein]-C-terminal Gly-Gly + 2-[(2R,5Z)-2-carboxy-4-methylthiazol-5(2H)-ylidene]ethyl phosphate + 2 H2O + H(+). The protein operates within cofactor biosynthesis; thiamine diphosphate biosynthesis. Catalyzes the rearrangement of 1-deoxy-D-xylulose 5-phosphate (DXP) to produce the thiazole phosphate moiety of thiamine. Sulfur is provided by the thiocarboxylate moiety of the carrier protein ThiS. In vitro, sulfur can be provided by H(2)S. The sequence is that of Thiazole synthase from Acinetobacter baumannii (strain SDF).